The following is a 147-amino-acid chain: MKFFLILGFCLLPLIAQGKVFQRCELAAAMKKHGLSNYRGYSLGHWVCAAKYESNFNTAAINRNRDGSSDYGILQINSRWWCNDGRTSGAKNLCKISCSALLSSDITASVNCAKRVVSDKNGMNAWVAWRNHCKGRDVSQWIRGCRV.

The N-terminal stretch at 1 to 18 is a signal peptide; it reads MKFFLILGFCLLPLIAQG. The C-type lysozyme domain occupies 19–147; it reads KVFQRCELAA…VSQWIRGCRV (129 aa). 4 disulfides stabilise this stretch: cysteine 24–cysteine 145, cysteine 48–cysteine 133, cysteine 82–cysteine 98, and cysteine 94–cysteine 112. Catalysis depends on residues glutamate 53 and aspartate 70. Aspartate 119 is a binding site for substrate.

This sequence belongs to the glycosyl hydrolase 22 family. Monomer. In terms of tissue distribution, expressed in liver and ovary. Not expressed in bone marrow, lung, spleen, intestine or oviduct.

The protein resides in the secreted. The enzyme catalyses Hydrolysis of (1-&gt;4)-beta-linkages between N-acetylmuramic acid and N-acetyl-D-glucosamine residues in a peptidoglycan and between N-acetyl-D-glucosamine residues in chitodextrins.. Lysozymes have primarily a bacteriolytic function; those in tissues and body fluids are associated with the monocyte-macrophage system and enhance the activity of immunoagents. Has bacteriolytic activity against M.luteus. In Dromaius novaehollandiae (Emu), this protein is Lysozyme C.